The following is a 418-amino-acid chain: Probable serine hydroxymethyltransferase (418 aa).

(6S)-5,6,7,8-tetrahydrofolate is bound by residues Leu118 and 122–124 (GHL). Lys226 carries the N6-(pyridoxal phosphate)lysine modification. Residue 351–353 (SPF) participates in (6S)-5,6,7,8-tetrahydrofolate binding.

The protein belongs to the SHMT family. In terms of assembly, homodimer. Pyridoxal 5'-phosphate is required as a cofactor.

The protein resides in the cytoplasm. The enzyme catalyses (6R)-5,10-methylene-5,6,7,8-tetrahydrofolate + glycine + H2O = (6S)-5,6,7,8-tetrahydrofolate + L-serine. It participates in one-carbon metabolism; tetrahydrofolate interconversion. Functionally, catalyzes the reversible interconversion of serine and glycine with tetrahydrofolate (THF) serving as the one-carbon carrier. This reaction serves as the major source of one-carbon groups required for the biosynthesis of purines, thymidylate, methionine, and other important biomolecules. The chain is Probable serine hydroxymethyltransferase from Mesomycoplasma hyopneumoniae (strain 7448) (Mycoplasma hyopneumoniae).